We begin with the raw amino-acid sequence, 725 residues long: Exocyst complex component 8 (725 aa).

Position 19 is a phosphoserine (serine 19). The interval 116–159 (AASGGEEGGGGAGGRDQLRGQTGFFPSPGGASRDGSGPGEEGKQ) is disordered. Residues 120–129 (GEEGGGGAGG) are compositionally biased toward gly residues. A PH domain is found at 182-282 (YLVYNGDLVE…WLEVLEETKR (101 aa)). Residues 285–322 (SEKRRREQEEAAAPRGPPQVTPKASNPFEDEDDDEPTV) are disordered. The segment covering 312–322 (FEDEDDDEPTV) has biased composition (acidic residues).

The protein belongs to the EXO84 family. The exocyst complex is composed of EXOC1, EXOC2, EXOC3, EXOC4, EXOC5, EXOC6, EXOC7 and EXOC8. Interacts (via PH domain) with GTP-bound RALA and RALB. Interacts with SH3BP1; required for the localization of both SH3BP1 and the exocyst to the leading edge of migrating cells.

The protein localises to the cytoplasm. Its subcellular location is the perinuclear region. It localises to the cell projection. It is found in the growth cone. Functionally, component of the exocyst complex involved in the docking of exocytic vesicles with fusion sites on the plasma membrane. This chain is Exocyst complex component 8 (EXOC8), found in Bos taurus (Bovine).